The sequence spans 198 residues: Probable molybdenum cofactor guanylyltransferase (198 aa).

GTP contacts are provided by residues 9–11 (LAG), lysine 22, aspartate 66, and aspartate 95. Residue aspartate 95 coordinates Mg(2+).

The protein belongs to the MobA family. Requires Mg(2+) as cofactor.

The protein resides in the cytoplasm. It catalyses the reaction Mo-molybdopterin + GTP + H(+) = Mo-molybdopterin guanine dinucleotide + diphosphate. In terms of biological role, transfers a GMP moiety from GTP to Mo-molybdopterin (Mo-MPT) cofactor (Moco or molybdenum cofactor) to form Mo-molybdopterin guanine dinucleotide (Mo-MGD) cofactor. This chain is Probable molybdenum cofactor guanylyltransferase, found in Clostridium perfringens (strain ATCC 13124 / DSM 756 / JCM 1290 / NCIMB 6125 / NCTC 8237 / Type A).